The sequence spans 393 residues: Histidinol dehydrogenase (393 aa).

Residues Tyr112, Gln171, and Asn194 each coordinate NAD(+). Thr217, Gln239, and His242 together coordinate substrate. The Zn(2+) site is built by Gln239 and His242. Active-site proton acceptor residues include Glu293 and His294. Substrate is bound by residues His294, Asp326, Glu379, and His384. Asp326 lines the Zn(2+) pocket. Position 384 (His384) interacts with Zn(2+).

It belongs to the histidinol dehydrogenase family. Zn(2+) serves as cofactor.

It carries out the reaction L-histidinol + 2 NAD(+) + H2O = L-histidine + 2 NADH + 3 H(+). It participates in amino-acid biosynthesis; L-histidine biosynthesis; L-histidine from 5-phospho-alpha-D-ribose 1-diphosphate: step 9/9. In terms of biological role, catalyzes the sequential NAD-dependent oxidations of L-histidinol to L-histidinaldehyde and then to L-histidine. This Sulfolobus acidocaldarius (strain ATCC 33909 / DSM 639 / JCM 8929 / NBRC 15157 / NCIMB 11770) protein is Histidinol dehydrogenase.